The sequence spans 667 residues: Long-chain fatty acid transport protein 3 (667 aa).

A helical transmembrane segment spans residues 3-23 (ALLLLLPLLLLLPLLLKLDVW). The disordered stretch occupies residues 114–144 (TGGRRGSGRGSTEEGARVAPPAGDAAARGTT). Low complexity predominate over residues 130-144 (RVAPPAGDAAARGTT). ATP contacts are provided by residues 272–276 (TSGTT), histidine 315, threonine 412, aspartate 512, arginine 527, and lysine 619.

The protein belongs to the ATP-dependent AMP-binding enzyme family. Expressed at high levels in adrenal gland, testis and ovary. Expressed at lower levels in adult brain. Found in adrenal cortical cells, spermatocytes and interstitial cells of the testis, theca cells of the ovary, cerebral cortical neurons, and cerebellar Purkinje cells (at protein level).

It is found in the mitochondrion membrane. It carries out the reaction a fatty acid(in) = a fatty acid(out). The enzyme catalyses a long-chain fatty acid + ATP + CoA = a long-chain fatty acyl-CoA + AMP + diphosphate. The catalysed reaction is (5Z,8Z,11Z,14Z)-eicosatetraenoate + ATP + CoA = (5Z,8Z,11Z,14Z)-eicosatetraenoyl-CoA + AMP + diphosphate. It catalyses the reaction hexadecanoate + ATP + CoA = hexadecanoyl-CoA + AMP + diphosphate. It carries out the reaction (9Z)-octadecenoate + ATP + CoA = (9Z)-octadecenoyl-CoA + AMP + diphosphate. The enzyme catalyses (9Z,12Z)-octadecadienoate + ATP + CoA = (9Z,12Z)-octadecadienoyl-CoA + AMP + diphosphate. The catalysed reaction is a very long-chain fatty acid + ATP + CoA = a very long-chain fatty acyl-CoA + AMP + diphosphate. It catalyses the reaction tetracosanoate + ATP + CoA = tetracosanoyl-CoA + AMP + diphosphate. Mainly functions as an acyl-CoA ligase catalyzing the ATP-dependent formation of fatty acyl-CoA using LCFA and very-long-chain fatty acids (VLCFA) as substrates. Can mediate the levels of long-chain fatty acids (LCFA) in the cell by facilitating their transport across membranes. The protein is Long-chain fatty acid transport protein 3 (Slc27a3) of Mus musculus (Mouse).